Reading from the N-terminus, the 540-residue chain is MLHKYLKLICLLAAICVLCIISQNSTKIWGALKLPNSHYYSNTSMISSIPKMSVSPVKSLTETELRVKEILEKLDRLIPPRPFTHVNTTTSATHSTATILNPQDKYCVGDQLDILLEVRDYLGHQKEYGGDFLRARMFSPALKAGASGKVTDFNNGTYLVSFTLFWEGQVSLSVLLIHPSEGASALWRARNQGYDRIIFKGQFVNGTSHVFTECSLTLNSNTEECKYLNGRDQDVFYCMKPQHMPCEALTHVTSRNRDISYLTSKEKNLFHRSKVGVEIMKNQHIDVSQCNKSKEVKEKCQIGMKIPVPGGYTLQGRWLTTFCNQIQLDTAKISGCLKGKLIYLMGDSTLRQWIYYLPKVMKTLKFFDLHETGNFKKHLLLDAEKHTQIQWKKHSHPFVTYQLFSVIDHGYIPQEIDRLIGDKDTVIVITFGQHFRPFPIDIFIRRAISVRQAIERLFLRSPATKVIVKTENIREMHIEAERFGDFHGYIQYLTLKDIFKDLNVGVVDAWDMTIAYGTNNVHPPDQVIGNQINMFLNYIC.

The first 22 residues, 1-22 (MLHKYLKLICLLAAICVLCIIS), serve as a signal peptide directing secretion. N-linked (GlcNAc...) asparagine glycosylation is found at asparagine 24, asparagine 42, asparagine 87, asparagine 155, asparagine 205, and asparagine 291.

It belongs to the NXPE family. In terms of tissue distribution, intestine, and to a lesser extent in kidney.

The protein resides in the secreted. This Oryctolagus cuniculus (Rabbit) protein is NXPE family member 1 (NXPE1).